The chain runs to 690 residues: Methionine--tRNA ligase 1 (690 aa).

A 'HIGH' region motif is present at residues 11–21; the sequence is PYANGHIHIGH. 4 residues coordinate Zn(2+): Cys-142, Cys-145, Cys-155, and Cys-158. The short motif at 328–332 is the 'KMSKS' region element; sequence KMSKS. Lys-331 contributes to the ATP binding site. One can recognise a tRNA-binding domain in the interval 590-690; that stretch reads DFSKVDLRVA…SGAKPGMRVH (101 aa).

This sequence belongs to the class-I aminoacyl-tRNA synthetase family. MetG type 1 subfamily. As to quaternary structure, homodimer. It depends on Zn(2+) as a cofactor.

It is found in the cytoplasm. It carries out the reaction tRNA(Met) + L-methionine + ATP = L-methionyl-tRNA(Met) + AMP + diphosphate. Functionally, is required not only for elongation of protein synthesis but also for the initiation of all mRNA translation through initiator tRNA(fMet) aminoacylation. The chain is Methionine--tRNA ligase 1 from Sorangium cellulosum (strain So ce56) (Polyangium cellulosum (strain So ce56)).